The following is a 695-amino-acid chain: MAQLDTLDIVVLVVLLVGSVAYFTKGSYWAVPKDPYAAANSAMNGAAKTGKTRDIIQKMEETGKNCVIFYGSQTGTAEDYASRLAKEGSQRFGLKTMVADLEDYDYENLDKFPEDKIAFFVLATYGEGEPTDNAVEFYQFITGEDVAFESGASAEEKPLSSLKYVAFGLGNNTYEHYNAMVRHVDAALTKLGAQRIGTAGEGDDGAGTMEEDFLAWKEPMWAALSESMNLQEREAVYEPVFSVIEDESLSPEDDSVYLGEPTQGHLSGSPKGPYSAHNPYIAPIVESRELFTAKDRNCLHMEIGIAGSNLTYQTGDHIAIWPTNAGVEVDRFLEVFGIEKKRHTVINIKGLDVTAKVPIPTPTTYDAAVRFYMEICAPVSRQFVSSLVPFAPDEESKAEIVRLGNDKDYFHEKISNQCFNIAQALQNITSKPFSAVPFSLLIEGLNRLQPRYYSISSSSLVQKDKISITAVVESVRLPGASHIVKGVTTNYLLALKQKQNGDPSPDPHGLTYAITGPRNKYDGIHVPVHVRHSNFKLPSDPSKPIIMVGPGTGVAPFRGFIQERAALAESGKDVGPTILFFGCRNRNEDFLYKEEWKVYQEKLGDKLKIITAFSRETAKKVYVQHRLQEHADLVSDLLKQKATFYVCGDAANMAREVNLVLGQIIAKSRGLPAEKGEEMVKHMRSSGSYQEDVWS.

Over 1–8 (MAQLDTLD) the chain is Lumenal. A helical membrane pass occupies residues 9-31 (IVVLVVLLVGSVAYFTKGSYWAV). Over 32-695 (PKDPYAAANS…SGSYQEDVWS (664 aa)) the chain is Cytoplasmic. The Flavodoxin-like domain maps to 66 to 221 (CVIFYGSQTG…DFLAWKEPMW (156 aa)). Residues 72–77 (SQTGTA), 123–126 (ATYG), 169–178 (LGNNTYEHYN), and D204 contribute to the FMN site. In terms of domain architecture, FAD-binding FR-type spans 277–538 (HNPYIAPIVE…HVRHSNFKLP (262 aa)). R296 contributes to the NADP(+) binding site. FAD contacts are provided by residues 451-454 (RYYS), 469-471 (TAV), and 486-489 (GVTT). Residues T552, 614-615 (SR), 620-624 (KVYVQ), and E656 contribute to the NADP(+) site. W694 contacts FAD.

Belongs to the NADPH--cytochrome P450 reductase family. This sequence in the N-terminal section; belongs to the flavodoxin family. It in the C-terminal section; belongs to the flavoprotein pyridine nucleotide cytochrome reductase family. FAD is required as a cofactor. It depends on FMN as a cofactor.

It localises to the endoplasmic reticulum membrane. The protein localises to the mitochondrion outer membrane. Its subcellular location is the cell membrane. The catalysed reaction is 2 oxidized [cytochrome P450] + NADPH = 2 reduced [cytochrome P450] + NADP(+) + H(+). This enzyme is required for electron transfer from NADP to cytochrome P450 in microsomes. It can also provide electron transfer to heme oxygenase and cytochrome B5. Involved in ergosterol biosynthesis. The sequence is that of NADPH--cytochrome P450 reductase from Aspergillus fumigatus (strain ATCC MYA-4609 / CBS 101355 / FGSC A1100 / Af293) (Neosartorya fumigata).